The following is a 559-amino-acid chain: DNA primase (559 aa).

A CHC2-type zinc finger spans residues C37 to C61. The Toprim domain occupies K246–N327. 3 residues coordinate Mg(2+): E252, D296, and D298.

The protein belongs to the DnaG primase family. Monomer. The C-terminal domain DnaB-binding domain exists as a dimer in solution. Interacts with DnaB via its C-terminal domain (residues 415-559 of DnaG); up to 3 DnaG fragments bind to a DnaB hexamer. Requires Zn(2+) as cofactor. The cofactor is Mg(2+).

It catalyses the reaction ssDNA + n NTP = ssDNA/pppN(pN)n-1 hybrid + (n-1) diphosphate.. Functionally, RNA polymerase that catalyzes the synthesis of short RNA molecules used as primers for DNA polymerase during DNA replication. Stimulates the 5'-3' DNA helicase activity of DnaB. This is DNA primase from Helicobacter pylori (strain ATCC 700392 / 26695) (Campylobacter pylori).